Here is a 103-residue protein sequence, read N- to C-terminus: Large ribosomal subunit protein uL24 (103 aa).

Belongs to the universal ribosomal protein uL24 family. In terms of assembly, part of the 50S ribosomal subunit.

One of two assembly initiator proteins, it binds directly to the 5'-end of the 23S rRNA, where it nucleates assembly of the 50S subunit. Functionally, one of the proteins that surrounds the polypeptide exit tunnel on the outside of the subunit. In Bacillus anthracis (strain A0248), this protein is Large ribosomal subunit protein uL24.